The following is a 140-amino-acid chain: Translation initiation factor 2 subunit beta (140 aa).

This sequence belongs to the eIF-2-beta/eIF-5 family. Heterotrimer composed of an alpha, a beta and a gamma chain.

EIF-2 functions in the early steps of protein synthesis by forming a ternary complex with GTP and initiator tRNA. The chain is Translation initiation factor 2 subunit beta (eif2b) from Pyrococcus abyssi (strain GE5 / Orsay).